An 806-amino-acid chain; its full sequence is Protein translocase subunit SecA 2 (806 aa).

Residues glutamine 122, glycine 140–threonine 144, and aspartate 533 each bind ATP.

This sequence belongs to the SecA family. As to quaternary structure, monomer and homodimer. Part of the essential Sec protein translocation apparatus which comprises SecA, SecYEG and auxiliary proteins SecDF. Other proteins may also be involved.

The protein localises to the cell membrane. Its subcellular location is the cytoplasm. The enzyme catalyses ATP + H2O + cellular proteinSide 1 = ADP + phosphate + cellular proteinSide 2.. Its function is as follows. Part of the Sec protein translocase complex. Interacts with the SecYEG preprotein conducting channel. Has a central role in coupling the hydrolysis of ATP to the transfer of proteins into and across the cell membrane, serving as an ATP-driven molecular motor driving the stepwise translocation of polypeptide chains across the membrane. The sequence is that of Protein translocase subunit SecA 2 from Mycobacterium ulcerans (strain Agy99).